A 235-amino-acid polypeptide reads, in one-letter code: Octanoyltransferase (235 aa).

In terms of domain architecture, BPL/LPL catalytic spans 52-229 (KNRQASMIFC…SICSALEYIN (178 aa)). Substrate-binding positions include 89–96 (RGGKITWH), 159–161 (AIG), and 172–174 (GFA). Catalysis depends on cysteine 190, which acts as the Acyl-thioester intermediate.

This sequence belongs to the LipB family.

Its subcellular location is the cytoplasm. The catalysed reaction is octanoyl-[ACP] + L-lysyl-[protein] = N(6)-octanoyl-L-lysyl-[protein] + holo-[ACP] + H(+). Its pathway is protein modification; protein lipoylation via endogenous pathway; protein N(6)-(lipoyl)lysine from octanoyl-[acyl-carrier-protein]: step 1/2. Catalyzes the transfer of endogenously produced octanoic acid from octanoyl-acyl-carrier-protein onto the lipoyl domains of lipoate-dependent enzymes. Lipoyl-ACP can also act as a substrate although octanoyl-ACP is likely to be the physiological substrate. The protein is Octanoyltransferase of Tropheryma whipplei (strain Twist) (Whipple's bacillus).